We begin with the raw amino-acid sequence, 107 residues long: CRISPR-associated endoribonuclease Cas2 (107 aa).

A Mg(2+)-binding site is contributed by D6.

The protein belongs to the CRISPR-associated endoribonuclease Cas2 protein family. In terms of assembly, homodimer, forms a heterotetramer with a Cas1 homodimer. The cofactor is Mg(2+).

In terms of biological role, CRISPR (clustered regularly interspaced short palindromic repeat), is an adaptive immune system that provides protection against mobile genetic elements (viruses, transposable elements and conjugative plasmids). CRISPR clusters contain sequences complementary to antecedent mobile elements and target invading nucleic acids. CRISPR clusters are transcribed and processed into CRISPR RNA (crRNA). Functions as a ssRNA-specific endoribonuclease. Involved in the integration of spacer DNA into the CRISPR cassette. The sequence is that of CRISPR-associated endoribonuclease Cas2 from Streptococcus mutans serotype c (strain NN2025).